Reading from the N-terminus, the 66-residue chain is Holin (66 aa).

The Cytoplasmic segment spans residues 1-29 (MMLDTATEAGKGTLAVTGVGIAVYSPYEI). A helical; Signal-anchor for type II membrane protein transmembrane segment spans residues 30–50 (ASLCAAVLTALYVGAQLITLL). Over 51–66 (PKMLDSIAELRRRFKK) the chain is Periplasmic.

In terms of assembly, homomultimer.

The protein resides in the host cell inner membrane. In terms of biological role, accumulates harmlessly in the cytoplasmic membrane until it reaches a critical concentration that triggers the formation of nanometer-scale pores (pinholes) causing host cell membrane depolarization and endolysin refolding and release into the periplasmic space. Once the pinholin has permeabilized the host cell membrane, the SAR-endolysin is released into the periplasm and breaks down the peptidoglycan layer. Determines the precise timing of host cell lysis. Participates with the SAR-endolysin and the U-spanin protein in the sequential events which lead to the programmed host cell lysis releasing the mature viral particles from the host cell. The polypeptide is Holin (Pseudomonas phage phiKMV).